Consider the following 1711-residue polypeptide: Serine/threonine-protein kinase MRCK beta (1711 aa).

Residues 76 to 342 (FEIIKVIGRG…IEDFKKHAFF (267 aa)) enclose the Protein kinase domain. ATP is bound by residues 82–90 (IGRGAFGEV) and lysine 105. Catalysis depends on aspartate 200, which acts as the Proton acceptor. Serine 221 and serine 233 each carry phosphoserine; by autocatalysis. Threonine 239 is subject to Phosphothreonine; by autocatalysis. One can recognise an AGC-kinase C-terminal domain in the interval 343–413 (EGLNWENIRN…TTESCFSDRG (71 aa)). At threonine 423 the chain carries Phosphothreonine. Coiled-coil stretches lie at residues 431 to 815 (QRDL…AHWE) and 878 to 939 (ELQS…FRAD). The segment at 461 to 484 (LQESTQTVQSLHGSSRALSNSNRD) is disordered. Positions 463–481 (ESTQTVQSLHGSSRALSNS) are enriched in polar residues. Arginine 671 carries the post-translational modification Omega-N-methylarginine. Phosphotyrosine is present on tyrosine 954. Positions 969–1009 (SSASEQETQAPKPEASPSMSVAASEQQEDMARPPQRPSAVP) are disordered. The Phorbol-ester/DAG-type zinc finger occupies 1025-1075 (AHQFSIKSFSSPTQCSHCTSLMVGLIRQGYACEVCSFACHVSCKDGAPQVC). The region spanning 1095–1214 (GTAYKGHVKV…WVGILEGLQS (120 aa)) is the PH domain. The CNH domain occupies 1240 to 1513 (IKAILTAAIV…RPLNSEGTLN (274 aa)). A CRIB domain is found at 1583 to 1596 (ISNPTNFNHVAHMG). Residues 1611–1711 (AVPPSQEERP…EGLEQPACDT (101 aa)) form a disordered region. The span at 1641–1650 (WPSSGGSEPS) shows a compositional bias: polar residues. The segment covering 1664–1675 (DFDKEPDSDSTK) has biased composition (basic and acidic residues). Phosphoserine occurs at positions 1680, 1682, 1686, 1690, and 1693.

This sequence belongs to the protein kinase superfamily. AGC Ser/Thr protein kinase family. DMPK subfamily. As to quaternary structure, homodimer and homotetramer via the coiled coil regions. Interacts tightly with GTP-bound but not GDP-bound CDC42. Interacts with TJP1, when in the presence of catalytically active CDC42. Forms a tripartite complex with MYO18A and LURAP1 with the latter acting as an adapter connecting CDC42BPB and MYO18A. LURAP1 binding results in activation of CDC42BPB by abolition of its negative autoregulation. Interacts with STRIP1, STRN3 and SIKE1. Interacts with CPNE4 (via VWFA domain). Interacts with LURAP1. Interacts (via AGC-kinase C-terminal domain) with FAM89B/LRAP25 (via LRR repeat). Forms a tripartite complex with FAM89B/LRAP25 and LIMK1. The cofactor is Mg(2+). Proteolytically cleaved by caspases upon apoptosis induction. In terms of tissue distribution, expressed in all tissues examined, with high levels in heart, brain, placenta and lung.

The protein localises to the cytoplasm. It is found in the cell membrane. The protein resides in the cell junction. Its subcellular location is the cell projection. It localises to the lamellipodium. The catalysed reaction is L-seryl-[protein] + ATP = O-phospho-L-seryl-[protein] + ADP + H(+). It catalyses the reaction L-threonyl-[protein] + ATP = O-phospho-L-threonyl-[protein] + ADP + H(+). With respect to regulation, maintained in an inactive, closed conformation by an interaction between the kinase domain and the negative autoregulatory C-terminal coiled-coil region. Agonist binding to the phorbol ester binding site disrupts this, releasing the kinase domain to allow N-terminus-mediated dimerization and kinase activation by transautophosphorylation. Inhibited by chelerythrine chloride. In terms of biological role, serine/threonine-protein kinase which is an important downstream effector of CDC42 and plays a role in the regulation of cytoskeleton reorganization and cell migration. Regulates actin cytoskeletal reorganization via phosphorylation of PPP1R12C and MYL9/MLC2. In concert with MYO18A and LURAP1, is involved in modulating lamellar actomyosin retrograde flow that is crucial to cell protrusion and migration. Phosphorylates PPP1R12A. In concert with FAM89B/LRAP25 mediates the targeting of LIMK1 to the lamellipodium resulting in its activation and subsequent phosphorylation of CFL1 which is important for lamellipodial F-actin regulation. This is Serine/threonine-protein kinase MRCK beta from Homo sapiens (Human).